The primary structure comprises 328 residues: DNA-directed RNA polymerase subunit alpha (328 aa).

The interval 1 to 231 is alpha N-terminal domain (alpha-NTD); it reads MQTNLLKPKA…EQLAVFAQLE (231 aa). The alpha C-terminal domain (alpha-CTD) stretch occupies residues 248–328; it reads FDPILLRPVD…NWPPQGLDKR (81 aa).

The protein belongs to the RNA polymerase alpha chain family. In terms of assembly, homodimer. The RNAP catalytic core consists of 2 alpha, 1 beta, 1 beta' and 1 omega subunit. When a sigma factor is associated with the core the holoenzyme is formed, which can initiate transcription.

It catalyses the reaction RNA(n) + a ribonucleoside 5'-triphosphate = RNA(n+1) + diphosphate. In terms of biological role, DNA-dependent RNA polymerase catalyzes the transcription of DNA into RNA using the four ribonucleoside triphosphates as substrates. The protein is DNA-directed RNA polymerase subunit alpha of Leptothrix cholodnii (strain ATCC 51168 / LMG 8142 / SP-6) (Leptothrix discophora (strain SP-6)).